Consider the following 293-residue polypeptide: Phosphatidylserine decarboxylase proenzyme (293 aa).

Residues Asp-88, His-144, and Ser-247 each act as charge relay system; for autoendoproteolytic cleavage activity in the active site. Ser-247 acts as the Schiff-base intermediate with substrate; via pyruvic acid; for decarboxylase activity in catalysis. Ser-247 is modified (pyruvic acid (Ser); by autocatalysis).

It belongs to the phosphatidylserine decarboxylase family. PSD-B subfamily. Prokaryotic type I sub-subfamily. As to quaternary structure, heterodimer of a large membrane-associated beta subunit and a small pyruvoyl-containing alpha subunit. It depends on pyruvate as a cofactor. Post-translationally, is synthesized initially as an inactive proenzyme. Formation of the active enzyme involves a self-maturation process in which the active site pyruvoyl group is generated from an internal serine residue via an autocatalytic post-translational modification. Two non-identical subunits are generated from the proenzyme in this reaction, and the pyruvate is formed at the N-terminus of the alpha chain, which is derived from the carboxyl end of the proenzyme. The autoendoproteolytic cleavage occurs by a canonical serine protease mechanism, in which the side chain hydroxyl group of the serine supplies its oxygen atom to form the C-terminus of the beta chain, while the remainder of the serine residue undergoes an oxidative deamination to produce ammonia and the pyruvoyl prosthetic group on the alpha chain. During this reaction, the Ser that is part of the protease active site of the proenzyme becomes the pyruvoyl prosthetic group, which constitutes an essential element of the active site of the mature decarboxylase.

Its subcellular location is the cell membrane. The enzyme catalyses a 1,2-diacyl-sn-glycero-3-phospho-L-serine + H(+) = a 1,2-diacyl-sn-glycero-3-phosphoethanolamine + CO2. It functions in the pathway phospholipid metabolism; phosphatidylethanolamine biosynthesis; phosphatidylethanolamine from CDP-diacylglycerol: step 2/2. In terms of biological role, catalyzes the formation of phosphatidylethanolamine (PtdEtn) from phosphatidylserine (PtdSer). The polypeptide is Phosphatidylserine decarboxylase proenzyme (Xylella fastidiosa (strain M12)).